A 684-amino-acid chain; its full sequence is Protein SEEDLING PLASTID DEVELOPMENT 1 (684 aa).

The transit peptide at 1–78 (MRALNSRLVL…FSFDVRSPSS (78 aa)) directs the protein to the chloroplast. The segment at 33-91 (SDSSSSFRRTRGARQRIASSKSPASSPSPVRRPSDGFSFDVRSPSSDSSISSRKSPTTA) is disordered. Positions 50–88 (ASSKSPASSPSPVRRPSDGFSFDVRSPSSDSSISSRKSP) are enriched in low complexity. Residue 220–227 (GSPGVGKT) coordinates ATP. Residues 651 to 684 (PRRSTKKTLTSSSPQKSADGSMGTTGTRLPFLKD) form a disordered region. Low complexity predominate over residues 657–667 (KTLTSSSPQKS).

The protein belongs to the ycf45 family.

Its subcellular location is the plastid. It localises to the chloroplast membrane. The protein resides in the chloroplast envelope. Its function is as follows. Required during eoplast (a highly reduced plastid type present during the degreening and dehydration stages of seed maturation) development in embryos and early stages of eoplast redifferentiation during seedling growth. This chain is Protein SEEDLING PLASTID DEVELOPMENT 1, found in Arabidopsis thaliana (Mouse-ear cress).